A 104-amino-acid chain; its full sequence is Thioredoxin (104 aa).

Residues 2-104 (AIVKATDQSF…ALQELVNKHL (103 aa)) form the Thioredoxin domain. Residues Cys-29 and Cys-32 are joined by a disulfide bond.

This sequence belongs to the thioredoxin family.

Functionally, participates in various redox reactions through the reversible oxidation of its active center dithiol to a disulfide and catalyzes dithiol-disulfide exchange reactions. The polypeptide is Thioredoxin (trxA) (Bacillus subtilis (strain 168)).